Here is a 353-residue protein sequence, read N- to C-terminus: Probable butyrate kinase (353 aa).

It belongs to the acetokinase family.

The protein localises to the cytoplasm. It carries out the reaction butanoate + ATP = butanoyl phosphate + ADP. This Bacteroides thetaiotaomicron (strain ATCC 29148 / DSM 2079 / JCM 5827 / CCUG 10774 / NCTC 10582 / VPI-5482 / E50) protein is Probable butyrate kinase.